The chain runs to 279 residues: Threonylcarbamoyl-AMP synthase (279 aa).

A mitochondrion-targeting transit peptide spans 1 to 55 (MSPARRCRGMRAAVAASVGLSEGPAGSRSGRLFRPPSPAPAAPGARLLRLPGSGA). The tract at residues 21 to 41 (SEGPAGSRSGRLFRPPSPAPA) is disordered. Serine 60 carries the phosphoserine modification. A YrdC-like domain is found at 67–257 (TEALRAAVAE…KFGIIRPGCA (191 aa)).

This sequence belongs to the SUA5 family. In terms of assembly, interacts with RSC1A1. As to expression, ubiquitously expressed.

The protein localises to the cytoplasm. The protein resides in the mitochondrion. It localises to the cell membrane. The catalysed reaction is L-threonine + hydrogencarbonate + ATP = L-threonylcarbamoyladenylate + diphosphate + H2O. Its function is as follows. Cytoplasmic and mitochondrial threonylcarbamoyl-AMP synthase required for the formation of a threonylcarbamoyl group on adenosine at position 37 (t(6)A37) in tRNAs that read codons beginning with adenine. Catalyzes the conversion of L-threonine, HCO(3)(-)/CO(2) and ATP to give threonylcarbamoyl-AMP (TC-AMP) as the acyladenylate intermediate, with the release of diphosphate. Participates in t(6)A37 formation in cytoplasmic and mitochondrial tRNAs. May regulate the activity of some transporters. The protein is Threonylcarbamoyl-AMP synthase of Homo sapiens (Human).